The following is a 594-amino-acid chain: Glutamate decarboxylase 1 (594 aa).

Low complexity predominate over residues 1–13; that stretch reads MASSTPSSSATSS. The interval 1–23 is disordered; the sequence is MASSTPSSSATSSNAGADPNTTN. Serine 78 is modified (phosphoserine). 190–192 is a 4-aminobutanoate binding site; sequence QLS. An N6-(pyridoxal phosphate)lysine modification is found at lysine 405. Arginine 567 provides a ligand contact to 4-aminobutanoate.

This sequence belongs to the group II decarboxylase family. In terms of assembly, homodimer. Pyridoxal 5'-phosphate is required as a cofactor.

The catalysed reaction is L-glutamate + H(+) = 4-aminobutanoate + CO2. Its function is as follows. Catalyzes the synthesis of the inhibitory neurotransmitter gamma-aminobutyric acid (GABA) with pyridoxal 5'-phosphate as cofactor. This Bos taurus (Bovine) protein is Glutamate decarboxylase 1 (GAD1).